The sequence spans 290 residues: Thioredoxin-like protein 1 (290 aa).

A Thioredoxin domain is found at 24–104; it reads VDCYADWCGP…PQALKEKVAL (81 aa). The cysteines at positions 31 and 34 are disulfide-linked. Residues 118–290 enclose the PITH domain; sequence SSSAPVKGFA…SKGKLQKVEA (173 aa).

It is found in the cytoplasm. Its subcellular location is the nucleus. In terms of biological role, has a role in cellular detoxification of alkyl hydroperoxide. The protein is Thioredoxin-like protein 1 (txl1) of Schizosaccharomyces pombe (strain 972 / ATCC 24843) (Fission yeast).